Reading from the N-terminus, the 2890-residue chain is Bifunctional DNA-directed RNA polymerase subunit beta-beta' (2890 aa).

Residues 1-1377 (MSKKIPLKNR…DINIFGDDVD (1377 aa)) are DNA-directed RNA polymerase subunit beta. Residues 1384–2890 (PIVIKEDDRP…LRTLEDDPKF (1507 aa)) form a DNA-directed RNA polymerase subunit beta' region. The Zn(2+) site is built by Cys-1449, Cys-1451, Cys-1465, and Cys-1468. Residues Asp-1849, Asp-1851, and Asp-1853 each coordinate Mg(2+). 4 residues coordinate Zn(2+): Cys-2179, Cys-2253, Cys-2260, and Cys-2263.

The protein in the N-terminal section; belongs to the RNA polymerase beta chain family. This sequence in the C-terminal section; belongs to the RNA polymerase beta' chain family. In terms of assembly, the RNAP catalytic core consists of 2 alpha, 1 beta/beta' and 1 omega subunit. When a sigma factor is associated with the core the holoenzyme is formed, which can initiate transcription. Mg(2+) is required as a cofactor. Requires Zn(2+) as cofactor.

It catalyses the reaction RNA(n) + a ribonucleoside 5'-triphosphate = RNA(n+1) + diphosphate. In terms of biological role, DNA-dependent RNA polymerase catalyzes the transcription of DNA into RNA using the four ribonucleoside triphosphates as substrates. This is Bifunctional DNA-directed RNA polymerase subunit beta-beta' (rpoBC) from Helicobacter pylori (strain Shi470).